The chain runs to 401 residues: Nicotinate phosphoribosyltransferase (401 aa).

At His221 the chain carries Phosphohistidine; by autocatalysis.

It belongs to the NAPRTase family. Transiently phosphorylated on a His residue during the reaction cycle. Phosphorylation strongly increases the affinity for substrates and increases the rate of nicotinate D-ribonucleotide production. Dephosphorylation regenerates the low-affinity form of the enzyme, leading to product release.

It catalyses the reaction nicotinate + 5-phospho-alpha-D-ribose 1-diphosphate + ATP + H2O = nicotinate beta-D-ribonucleotide + ADP + phosphate + diphosphate. It functions in the pathway cofactor biosynthesis; NAD(+) biosynthesis; nicotinate D-ribonucleotide from nicotinate: step 1/1. Catalyzes the synthesis of beta-nicotinate D-ribonucleotide from nicotinate and 5-phospho-D-ribose 1-phosphate at the expense of ATP. The protein is Nicotinate phosphoribosyltransferase of Yersinia pseudotuberculosis serotype O:1b (strain IP 31758).